A 285-amino-acid polypeptide reads, in one-letter code: Nucleotide-binding protein FMG_1084 (285 aa).

8 to 15 (GMSGAGKS) is a binding site for ATP. 59-62 (DIRG) serves as a coordination point for GTP.

The protein belongs to the RapZ-like family.

Displays ATPase and GTPase activities. The protein is Nucleotide-binding protein FMG_1084 of Finegoldia magna (strain ATCC 29328 / DSM 20472 / WAL 2508) (Peptostreptococcus magnus).